The primary structure comprises 235 residues: Large ribosomal subunit protein uL1 (235 aa).

This sequence belongs to the universal ribosomal protein uL1 family. Part of the 50S ribosomal subunit.

In terms of biological role, binds directly to 23S rRNA. The L1 stalk is quite mobile in the ribosome, and is involved in E site tRNA release. Its function is as follows. Protein L1 is also a translational repressor protein, it controls the translation of the L11 operon by binding to its mRNA. The polypeptide is Large ribosomal subunit protein uL1 (Synechococcus sp. (strain WH7803)).